A 302-amino-acid chain; its full sequence is GTPase Era (302 aa).

The Era-type G domain occupies 10–178 (RCGYVAIVGR…EAQIAKHLPE (169 aa)). Positions 18–25 (GRPNVGKS) are G1. 18 to 25 (GRPNVGKS) contacts GTP. The G2 stretch occupies residues 44–48 (QTTRH). Residues 65 to 68 (DTPG) are G3. Residues 65 to 69 (DTPGM) and 127 to 130 (NKTD) contribute to the GTP site. Residues 127–130 (NKTD) form a G4 region. The interval 157-159 (ISA) is G5. In terms of domain architecture, KH type-2 spans 201 to 285 (VREKIMRQLG…MLNLWVKVKG (85 aa)).

This sequence belongs to the TRAFAC class TrmE-Era-EngA-EngB-Septin-like GTPase superfamily. Era GTPase family. Monomer.

The protein resides in the cytoplasm. It localises to the cell inner membrane. In terms of biological role, an essential GTPase that binds both GDP and GTP, with rapid nucleotide exchange. Plays a role in 16S rRNA processing and 30S ribosomal subunit biogenesis and possibly also in cell cycle regulation and energy metabolism. This Pseudomonas putida (strain ATCC 47054 / DSM 6125 / CFBP 8728 / NCIMB 11950 / KT2440) protein is GTPase Era.